Reading from the N-terminus, the 61-residue chain is Small ribosomal subunit protein uS14 (61 aa).

C24, C27, C40, and C43 together coordinate Zn(2+).

It belongs to the universal ribosomal protein uS14 family. Zinc-binding uS14 subfamily. In terms of assembly, part of the 30S ribosomal subunit. Contacts proteins S3 and S10. The cofactor is Zn(2+).

Its function is as follows. Binds 16S rRNA, required for the assembly of 30S particles and may also be responsible for determining the conformation of the 16S rRNA at the A site. This is Small ribosomal subunit protein uS14 from Kosmotoga olearia (strain ATCC BAA-1733 / DSM 21960 / TBF 19.5.1).